We begin with the raw amino-acid sequence, 493 residues long: Probable polyol transporter 6 (493 aa).

Helical transmembrane passes span 25–45, 54–74, 85–105, 116–136, 142–162, 177–197, 275–295, 313–333, 343–363, 372–392, 414–434, and 444–464; these read SIVS…MVFI, VQIE…SLLA, YTIV…GWGP, TAGL…AEIA, GLLA…GYIV, LMLG…LKMP, VLLT…EAVL, LFLV…TATL, LLLT…FGLT, LAWA…FFSI, GASL…MSFL, and GAFF…FFLL.

It belongs to the major facilitator superfamily. Sugar transporter (TC 2.A.1.1) family.

It is found in the membrane. Plasma membrane sugar-proton symporter. The polypeptide is Probable polyol transporter 6 (PLT6) (Arabidopsis thaliana (Mouse-ear cress)).